We begin with the raw amino-acid sequence, 112 residues long: MMNLTDIIDNCLENDTGDHRALDSETAQFIRITLMNDTLVNSIHPSVYDAIIVTKYPVELHKKMTGAVFIDKKNRFKDGQNIISSVIKSITKLRHEIYRVETAKSAYLVIMK.

This is an uncharacterized protein from Escherichia coli (Bacteriophage T4).